Consider the following 393-residue polypeptide: Lipid-A-disaccharide synthase (393 aa).

It belongs to the LpxB family.

The enzyme catalyses a lipid X + a UDP-2-N,3-O-bis[(3R)-3-hydroxyacyl]-alpha-D-glucosamine = a lipid A disaccharide + UDP + H(+). It functions in the pathway bacterial outer membrane biogenesis; LPS lipid A biosynthesis. Functionally, condensation of UDP-2,3-diacylglucosamine and 2,3-diacylglucosamine-1-phosphate to form lipid A disaccharide, a precursor of lipid A, a phosphorylated glycolipid that anchors the lipopolysaccharide to the outer membrane of the cell. This is Lipid-A-disaccharide synthase from Colwellia psychrerythraea (strain 34H / ATCC BAA-681) (Vibrio psychroerythus).